The primary structure comprises 307 residues: 2-methoxy-6-polyprenyl-1,4-benzoquinol methylase, mitochondrial (307 aa).

A mitochondrion-targeting transit peptide spans 1 to 19 (MLISSRIVRSSLVNVPLRL). S-adenosyl-L-methionine is bound by residues Ser-122, Asp-148, 179–180 (NG), and Ser-197.

This sequence belongs to the class I-like SAM-binding methyltransferase superfamily. MenG/UbiE family. As to quaternary structure, component of a multi-subunit COQ enzyme complex, composed of at least COQ3, COQ4, COQ5, COQ6, COQ7 and COQ9. Interacts with COQ3.

Its subcellular location is the mitochondrion inner membrane. The enzyme catalyses 2-methoxy-6-(all-trans-hexaprenyl)benzene-1,4-diol + S-adenosyl-L-methionine = 5-methoxy-2-methyl-3-(all-trans-hexaprenyl)benzene-1,4-diol + S-adenosyl-L-homocysteine + H(+). It functions in the pathway cofactor biosynthesis; ubiquinone biosynthesis. Methyltransferase required for the conversion of 2-hexaprenyl-6-methoxy-1,4-benzoquinol (DDMQH2) to 2-hexaprenyl-3-methyl-6-methoxy-1,4-benzoquinol (DMQH2). The chain is 2-methoxy-6-polyprenyl-1,4-benzoquinol methylase, mitochondrial from Saccharomyces cerevisiae (strain ATCC 204508 / S288c) (Baker's yeast).